A 38-amino-acid chain; its full sequence is Bacteriocin curvaticin FS47 (38 aa).

It localises to the secreted. Functionally, bacteriocin active against Listeria monocytogenes, Pediococcus, Enterococcus, Lactobacilli and Bacilli. The protein is Bacteriocin curvaticin FS47 of Latilactobacillus curvatus (Lactobacillus curvatus).